We begin with the raw amino-acid sequence, 120 residues long: MLLDFLDQLFSRHSGNSREQAKQRLKLILAHDRADLTPAALEAMRLEILGVVSRYVELDSEGMQFHLAAEGGTTALIANLPIRRVKPLAEARLNSCEGENPQQDPGAAPSEGGHLSSPSP.

A disordered region spans residues 93-120 (LNSCEGENPQQDPGAAPSEGGHLSSPSP).

The protein belongs to the MinE family.

In terms of biological role, prevents the cell division inhibition by proteins MinC and MinD at internal division sites while permitting inhibition at polar sites. This ensures cell division at the proper site by restricting the formation of a division septum at the midpoint of the long axis of the cell. This Synechococcus sp. (strain JA-3-3Ab) (Cyanobacteria bacterium Yellowstone A-Prime) protein is Cell division topological specificity factor.